The primary structure comprises 64 residues: Outer envelope membrane protein 7 (64 aa).

Residues 1 to 11 (MGKTSGAKQAT) are Chloroplast intermembrane-facing. Residues 12 to 32 (VVVAAMALGWLAIEIAFKPFL) form a helical membrane-spanning segment. Positions 29–35 (KPFLDKF) match the AKR2A-binding sequence (ABS) required for chloroplast outer envelope membrane targeting motif. The Cytoplasmic segment spans residues 33–64 (DKFRSSIDKSDPTKDPDDFDTAATATTSKEGL). Residues 39–48 (IDKSDPTKDP) show a composition bias toward basic and acidic residues. Residues 39 to 64 (IDKSDPTKDPDDFDTAATATTSKEGL) are disordered. Over residues 53 to 64 (TAATATTSKEGL) the composition is skewed to low complexity.

In terms of assembly, interacts with AKR2A. In terms of tissue distribution, confined to green tissues.

It localises to the plastid. The protein resides in the chloroplast outer membrane. In Arabidopsis thaliana (Mouse-ear cress), this protein is Outer envelope membrane protein 7.